Reading from the N-terminus, the 334-residue chain is Glyoxylate reductase (334 aa).

Residues 158 to 161 (FGRI), 180 to 182 (SRT), and 239 to 241 (IAR) contribute to the NADP(+) site. Catalysis depends on residues R241 and E270. The Proton donor role is filled by H288. 288–290 (HIG) provides a ligand contact to NADP(+).

This sequence belongs to the D-isomer specific 2-hydroxyacid dehydrogenase family. GyaR subfamily. In terms of assembly, homodimer.

The protein localises to the cytoplasm. It carries out the reaction glycolate + NAD(+) = glyoxylate + NADH + H(+). The sequence is that of Glyoxylate reductase from Thermococcus onnurineus (strain NA1).